The sequence spans 510 residues: Gelatinase (510 aa).

Residues Met-1–Ala-30 form the signal peptide. Positions Glu-31–His-192 are excised as a propeptide. A Ca(2+)-binding site is contributed by Asp-324. Zn(2+) is bound at residue His-328. Residue Glu-329 is part of the active site. Positions 332 and 352 each coordinate Zn(2+). Residue Ser-376 participates in Ca(2+) binding. The active-site Proton donor is His-419.

The protein belongs to the peptidase M4 family.

It is found in the secreted. The enzyme catalyses Preferential cleavage: Xaa-|-Leu, Xaa-|-Phe, Xaa-|-Tyr, Xaa-|-Ala.. With respect to regulation, inhibited by L-leucine hydroxamate and phosphoramidon. Not inhibited by phenylmethanesulfonyl fluoride. Reversibly inactivated by straight-chain aliphatic alcohols. Its function is as follows. Metalloprotease capable of the hydrolysis of insoluble hydrophobic substrates. Hydrolyzes azocoll and gelatin and, at a lower rate, soluble and insoluble collagens. Does not cleave short synthetic peptides. Preferentially hydrolyzes the 24-Phe-|-Phe-25 bond in the insulin B-chain, followed by the 5-His-|-Leu-6 bond. Inactivates endothelin-1, primarily by cleavage of the 5-Ser-|-Leu-6 and 16-His-|-Leu-17 bonds. Hydrolyzes the alpha chain of C3 to generate a C3b-like protein. Inhibits complement-mediated hemolysis and opsinization of bacteria. Hydrolyzes the insect antimicrobial peptide cecropin. Decreases the length of E.faecalis chains via the activation of autolysin. Degrades polymerized fibrin. This Enterococcus faecalis (strain ATCC 700802 / V583) protein is Gelatinase.